Here is a 377-residue protein sequence, read N- to C-terminus: Lipoyl synthase, mitochondrial (377 aa).

Residues Cys-98, Cys-103, Cys-109, Cys-128, Cys-132, Cys-135, and Ser-343 each coordinate [4Fe-4S] cluster. The Radical SAM core domain maps to 113 to 332 (KKSEATATIM…RDTALDMGFL (220 aa)).

It belongs to the radical SAM superfamily. Lipoyl synthase family. [4Fe-4S] cluster is required as a cofactor.

It localises to the mitochondrion. The enzyme catalyses [[Fe-S] cluster scaffold protein carrying a second [4Fe-4S](2+) cluster] + N(6)-octanoyl-L-lysyl-[protein] + 2 oxidized [2Fe-2S]-[ferredoxin] + 2 S-adenosyl-L-methionine + 4 H(+) = [[Fe-S] cluster scaffold protein] + N(6)-[(R)-dihydrolipoyl]-L-lysyl-[protein] + 4 Fe(3+) + 2 hydrogen sulfide + 2 5'-deoxyadenosine + 2 L-methionine + 2 reduced [2Fe-2S]-[ferredoxin]. It functions in the pathway protein modification; protein lipoylation via endogenous pathway; protein N(6)-(lipoyl)lysine from octanoyl-[acyl-carrier-protein]: step 2/2. Functionally, catalyzes the radical-mediated insertion of two sulfur atoms into the C-6 and C-8 positions of the octanoyl moiety bound to the lipoyl domains of lipoate-dependent enzymes, thereby converting the octanoylated domains into lipoylated derivatives. In Candida tropicalis (strain ATCC MYA-3404 / T1) (Yeast), this protein is Lipoyl synthase, mitochondrial.